The chain runs to 487 residues: Aspartyl/glutamyl-tRNA(Asn/Gln) amidotransferase subunit B (487 aa).

It belongs to the GatB/GatE family. GatB subfamily. In terms of assembly, heterotrimer of A, B and C subunits.

The enzyme catalyses L-glutamyl-tRNA(Gln) + L-glutamine + ATP + H2O = L-glutaminyl-tRNA(Gln) + L-glutamate + ADP + phosphate + H(+). It catalyses the reaction L-aspartyl-tRNA(Asn) + L-glutamine + ATP + H2O = L-asparaginyl-tRNA(Asn) + L-glutamate + ADP + phosphate + 2 H(+). Its function is as follows. Allows the formation of correctly charged Asn-tRNA(Asn) or Gln-tRNA(Gln) through the transamidation of misacylated Asp-tRNA(Asn) or Glu-tRNA(Gln) in organisms which lack either or both of asparaginyl-tRNA or glutaminyl-tRNA synthetases. The reaction takes place in the presence of glutamine and ATP through an activated phospho-Asp-tRNA(Asn) or phospho-Glu-tRNA(Gln). In Leptospira biflexa serovar Patoc (strain Patoc 1 / Ames), this protein is Aspartyl/glutamyl-tRNA(Asn/Gln) amidotransferase subunit B.